The primary structure comprises 499 residues: Proline dehydrogenase 1, mitochondrial (499 aa).

The transit peptide at 1–72 directs the protein to the mitochondrion; sequence MATRLLRTNF…LDLSDQARLF (72 aa).

This sequence belongs to the proline oxidase family. FAD serves as cofactor. As to expression, ubiquitous. Highest expression in pollen grains, in the stigma and in developing embryos.

The protein resides in the mitochondrion. It carries out the reaction L-proline + a quinone = (S)-1-pyrroline-5-carboxylate + a quinol + H(+). Its pathway is amino-acid degradation; L-proline degradation into L-glutamate; L-glutamate from L-proline: step 1/2. In terms of biological role, converts proline to delta-1-pyrroline-5-carboxylate. The sequence is that of Proline dehydrogenase 1, mitochondrial (POX1) from Arabidopsis thaliana (Mouse-ear cress).